The sequence spans 363 residues: UDP-N-acetylglucosamine--N-acetylmuramyl-(pentapeptide) pyrophosphoryl-undecaprenol N-acetylglucosamine transferase (363 aa).

UDP-N-acetyl-alpha-D-glucosamine-binding positions include 7–9, N125, S196, I251, and Q296; that span reads TGG.

It belongs to the glycosyltransferase 28 family. MurG subfamily.

The protein resides in the cell membrane. It carries out the reaction Mur2Ac(oyl-L-Ala-gamma-D-Glu-L-Lys-D-Ala-D-Ala)-di-trans,octa-cis-undecaprenyl diphosphate + UDP-N-acetyl-alpha-D-glucosamine = beta-D-GlcNAc-(1-&gt;4)-Mur2Ac(oyl-L-Ala-gamma-D-Glu-L-Lys-D-Ala-D-Ala)-di-trans,octa-cis-undecaprenyl diphosphate + UDP + H(+). It functions in the pathway cell wall biogenesis; peptidoglycan biosynthesis. Its function is as follows. Cell wall formation. Catalyzes the transfer of a GlcNAc subunit on undecaprenyl-pyrophosphoryl-MurNAc-pentapeptide (lipid intermediate I) to form undecaprenyl-pyrophosphoryl-MurNAc-(pentapeptide)GlcNAc (lipid intermediate II). In Latilactobacillus sakei subsp. sakei (strain 23K) (Lactobacillus sakei subsp. sakei), this protein is UDP-N-acetylglucosamine--N-acetylmuramyl-(pentapeptide) pyrophosphoryl-undecaprenol N-acetylglucosamine transferase.